The sequence spans 412 residues: Glutamate dehydrogenase (412 aa).

Lys-102 is an active-site residue.

It belongs to the Glu/Leu/Phe/Val dehydrogenases family. In terms of tissue distribution, in roots, stems, leaves and flowers but not in fruits.

It is found in the mitochondrion matrix. The enzyme catalyses L-glutamate + NAD(+) + H2O = 2-oxoglutarate + NH4(+) + NADH + H(+). It carries out the reaction L-glutamate + NADP(+) + H2O = 2-oxoglutarate + NH4(+) + NADPH + H(+). The polypeptide is Glutamate dehydrogenase (GDH1) (Solanum lycopersicum (Tomato)).